We begin with the raw amino-acid sequence, 223 residues long: N-(5'-phosphoribosyl)anthranilate isomerase (223 aa).

Belongs to the TrpF family.

The catalysed reaction is N-(5-phospho-beta-D-ribosyl)anthranilate = 1-(2-carboxyphenylamino)-1-deoxy-D-ribulose 5-phosphate. It functions in the pathway amino-acid biosynthesis; L-tryptophan biosynthesis; L-tryptophan from chorismate: step 3/5. This Moorella thermoacetica (strain ATCC 39073 / JCM 9320) protein is N-(5'-phosphoribosyl)anthranilate isomerase.